Here is a 58-residue protein sequence, read N- to C-terminus: Mesomartoxin (58 aa).

A signal peptide spans Met1–Gly29. Disulfide bonds link Cys31–Cys49, Cys35–Cys54, and Cys39–Cys56.

It belongs to the short scorpion toxin superfamily. Potassium channel inhibitor family. Alpha-KTx 26 subfamily. Expressed by the venom gland.

Its subcellular location is the secreted. Functionally, recombinant toxin that reversibly blocks the voltage-gated potassium channels Shaker (IC(50)=0.054 nM), rKv1.2/KCNA2 (IC(50)=15.6 nM), and rKv1.3/KCNA3 (IC(50)=12.5 uM). The protein is Mesomartoxin of Olivierus martensii (Manchurian scorpion).